The primary structure comprises 601 residues: Serine/threonine-protein phosphatase 2A 65 kDa regulatory subunit A beta isoform (601 aa).

Ala-2 bears the N-acetylalanine mark. 15 HEAT repeats span residues 20–58 (DSLYPIAVLIDELRNEDVQLRLNSIKKLSTIALALGVER), 59–96 (TRTELLPFLTDTIYDEDEVLLALAEQLGNFTGLVGGPD), 97–135 (FAHCLLPPLESLATVEETVVRDKAVESLRQISQEHTPVA), 136–173 (LEAHFVPLVKRLASGDWFTSRTSACGLFSVCYPRASNA), 174–212 (VKAEIRQHFRSLCSDDTPMVRRAAASKLGEFAKVLELDS), 213–251 (VKTEIVPLFTNLASDEQDSVRLLAVEACVSIAQLLSQED), 252–290 (LEALVMPTLRQAAEDKSWRVRYMVADKFSELQKAVGPKI), 291–333 (ALSD…RETV), 334–372 (IMNQILPYIKELVSDTNQHVKSALASVIMGLSTVLGKEN), 373–411 (TIEHLLPLFLAQLKDECPEVRLNIISNLDCVNEVIGIRQ), 412–450 (LSQSLLPAIVELAEDAKWRVRLAIIEYMPLLAGQLGVEF), 451–489 (FDEKLNSLCMAWLVDHVYAIREAATNNLMKLVQKFGTEW), 490–528 (AQNTIVPKVLVMANDPNYLHRMTTLFCINALSEACGKEI), 529–567 (TTKQMLPIVLKMAGDQVANVRFNVAKSLQKIGPILDTNA), and 568–601 (LQGEVKPVLQKLGQDEDMDVKYFAQEAISVLALA).

Belongs to the phosphatase 2A regulatory subunit A family. In terms of assembly, PP2A consists of a common heterodimeric core enzyme, composed of a 36 kDa catalytic subunit (subunit C) and a 65 kDa constant regulatory subunit (PR65 or subunit A), that associates with a variety of regulatory subunits. Proteins that associate with the core dimer include three families of regulatory subunits B (the R2/B/PR55/B55, R3/B''/PR72/PR130/PR59 and R5/B'/B56 families), the 48 kDa variable regulatory subunit, viral proteins, and cell signaling molecules. Interacts with IPO9. Interacts with SGO1. Interacts with RAF1.

The PR65 subunit of protein phosphatase 2A serves as a scaffolding molecule to coordinate the assembly of the catalytic subunit and a variable regulatory B subunit. This Mus musculus (Mouse) protein is Serine/threonine-protein phosphatase 2A 65 kDa regulatory subunit A beta isoform (Ppp2r1b).